Reading from the N-terminus, the 65-residue chain is Alpha-toxin Bot1 (65 aa).

An LCN-type CS-alpha/beta domain is found at 2-64 (RDAYIAQPEN…VPIRIPGKCH (63 aa)). Intrachain disulfides connect Cys12-Cys63, Cys16-Cys36, Cys22-Cys46, and Cys26-Cys48. Residue Phe65 is modified to Phenylalanine amide.

Belongs to the long (4 C-C) scorpion toxin superfamily. Sodium channel inhibitor family. Alpha subfamily. As to expression, expressed by the venom gland.

The protein resides in the secreted. Functionally, alpha toxins bind voltage-independently at site-3 of sodium channels (Nav) and inhibit the inactivation of the activated channels, thereby blocking neuronal transmission. This is Alpha-toxin Bot1 from Buthus occitanus tunetanus (Common European scorpion).